The chain runs to 428 residues: Cholecystokinin receptor type A (428 aa).

The Extracellular segment spans residues 1-41; it reads MDVVDSLLVNGSNITPPCELGLENETLFCLDQPRPSKEWQP. Asparagine 10 and asparagine 24 each carry an N-linked (GlcNAc...) asparagine glycan. An intrachain disulfide couples cysteine 18 to cysteine 29. The chain crosses the membrane as a helical span at residues 42-67; that stretch reads AVQILLYSLIFLLSVLGNTLVITVLI. Topologically, residues 68–77 are cytoplasmic; it reads RNKRMRTVTN. A helical membrane pass occupies residues 78 to 104; the sequence is IFLLSLAVSDLMLCLFCMPFNLIPNLL. The Extracellular portion of the chain corresponds to 105–115; the sequence is KDFIFGSAVCK. Residues cysteine 114 and cysteine 196 are joined by a disulfide bond. Residues 116–137 traverse the membrane as a helical segment; the sequence is TTTYFMGTSVSVSTFNLVAISL. At 138-157 the chain is on the cytoplasmic side; it reads ERYGAICKPLQSRVWQTKSH. A helical membrane pass occupies residues 158-178; the sequence is ALKVIAATWCLSFTIMTPYPI. At 179 to 210 the chain is on the extracellular side; the sequence is YSNLVPFTKNNNQTANMCRFLLPNDVMQQSWH. N-linked (GlcNAc...) asparagine glycosylation occurs at asparagine 190. The chain crosses the membrane as a helical span at residues 211–234; that stretch reads TFLLLILFLIPGIVMMVAYGLISL. Residues 235–313 lie on the Cytoplasmic side of the membrane; the sequence is ELYQGIKFEA…NLMAKKRVIR (79 aa). The segment at 248 to 272 is disordered; that stretch reads KSAKERKPSTTSSGKYEDSDGCYLQ. Residues 314-334 traverse the membrane as a helical segment; sequence MLIVIVVLFFLCWMPIFSANA. At 335 to 349 the chain is on the extracellular side; that stretch reads WRAYDTASAERRLSG. A helical membrane pass occupies residues 350-373; it reads TPISFILLLSYTSSCVNPIIYCFM. The Cytoplasmic portion of the chain corresponds to 374 to 428; that stretch reads NKRFRLGFMATFPCCPNPGPPGARGEVGEEEEGGTTGASLSRFSYSHMSASVPPQ. The S-palmitoyl cysteine moiety is linked to residue cysteine 387. Positions 394-428 are disordered; that stretch reads PGARGEVGEEEEGGTTGASLSRFSYSHMSASVPPQ. The span at 411-422 shows a compositional bias: polar residues; it reads ASLSRFSYSHMS.

The protein belongs to the G-protein coupled receptor 1 family.

It is found in the cell membrane. Functionally, receptor for cholecystokinin. Mediates pancreatic growth and enzyme secretion, smooth muscle contraction of the gall bladder and stomach. Has a 1000-fold higher affinity for CCK rather than for gastrin. It modulates feeding and dopamine-induced behavior in the central and peripheral nervous system. This receptor mediates its action by association with G proteins that activate a phosphatidylinositol-calcium second messenger system. This Homo sapiens (Human) protein is Cholecystokinin receptor type A (CCKAR).